The chain runs to 140 residues: FK506-binding protein 2 (140 aa).

The first 19 residues, 1–19, serve as a signal peptide directing secretion; the sequence is MKFTTGLSVLLFFVLQVFA. The PPIase FKBP-type domain occupies 43–132; sequence GDVVSVHYTG…IFETELVDIQ (90 aa).

It belongs to the FKBP-type PPIase family. FKBP2 subfamily.

Its subcellular location is the endoplasmic reticulum. The catalysed reaction is [protein]-peptidylproline (omega=180) = [protein]-peptidylproline (omega=0). Inhibited by both FK506 and rapamycin. In terms of biological role, PPIases accelerate the folding of proteins. It catalyzes the cis-trans isomerization of proline imidic peptide bonds in oligopeptides. The protein is FK506-binding protein 2 (FPR2) of Kluyveromyces lactis (strain ATCC 8585 / CBS 2359 / DSM 70799 / NBRC 1267 / NRRL Y-1140 / WM37) (Yeast).